The chain runs to 341 residues: L-threonine 3-dehydrogenase (341 aa).

Cys-38 provides a ligand contact to Zn(2+). Residues Thr-40 and His-43 each act as charge relay system in the active site. His-63, Glu-64, Cys-93, Cys-96, Cys-99, and Cys-107 together coordinate Zn(2+). Residues Ile-175, Asp-195, Arg-200, 262–264, and 286–287 each bind NAD(+); these read LGI and IY.

This sequence belongs to the zinc-containing alcohol dehydrogenase family. Homotetramer. Zn(2+) is required as a cofactor.

It is found in the cytoplasm. The enzyme catalyses L-threonine + NAD(+) = (2S)-2-amino-3-oxobutanoate + NADH + H(+). Its pathway is amino-acid degradation; L-threonine degradation via oxydo-reductase pathway; glycine from L-threonine: step 1/2. Catalyzes the NAD(+)-dependent oxidation of L-threonine to 2-amino-3-ketobutyrate. The protein is L-threonine 3-dehydrogenase of Shewanella sp. (strain ANA-3).